The sequence spans 229 residues: Apoptosis regulator Bcl-2 (229 aa).

Residues 10-30 (DNREIVMKYIHYKLSQRGYEW) carry the BH4 motif. A disordered region spans residues 30–82 (WDAGDAGAAPPGAAPAPGILSSQPGRTPAPSRTSPPPPPAAAAGPAPSPVPPV). Low complexity predominate over residues 33–61 (GDAGAAPPGAAPAPGILSSQPGRTPAPSR). Thr62 bears the Phosphothreonine; by MAPK8 mark. Pro residues predominate over residues 62-81 (TSPPPPPAAAAGPAPSPVPP). At Ser63 the chain carries Phosphoserine; by MAPK8 and PKC. Ser77 is subject to Phosphoserine; by MAPK8. The short motif at 83–97 (VHLTLRQAGDDFSRR) is the BH3 element. A BH1 motif is present at residues 126–145 (ELFRDGVNWGRIVAFFEFGG). The short motif at 177–192 (TWIQDNGGWDAFVELY) is the BH2 element. Residues 202–223 (FSWLSLKALLSLALVGACITLG) form a helical membrane-spanning segment.

This sequence belongs to the Bcl-2 family. In terms of assembly, forms homodimers, and heterodimers with BAX, BAD, BAK and Bcl-X(L). Heterodimerization with BAX requires intact BH1 and BH2 motifs, and is necessary for anti-apoptotic activity. Component of the complex, at least composed of LRPPRC, BECN1 and BCL2; the interactions prevent BECN1 from forming an autophagy-inducing complex with PIK3C3. Interacts with EI24. Also interacts with APAF1, BBC3, BCL2L1, BNIPL, MRPL41 and TP53BP2. Binding to FKBP8 seems to target BCL2 to the mitochondria and probably interferes with the binding of BCL2 to its targets. Interacts with BAG1 in an ATP-dependent manner. Interacts with RAF1 (the 'Ser-338' and 'Ser-339' phosphorylated form). Interacts (via the BH4 domain) with EGLN3; the interaction prevents the formation of the BAX-BCL2 complex and inhibits the anti-apoptotic activity of BCL2. Interacts with G0S2; this interaction also prevents the formation of the anti-apoptotic BAX-BCL2 complex. Interacts with RTL10/BOP. Interacts with the SCF(FBXO10) complex. Interacts (via the loop between motifs BH4 and BH3) with NLRP1 (via LRR repeats), but not with NLRP2, NLRP3, NLRP4, PYCARD, nor MEFV. Interacts with GIMAP3/IAN4, GIMAP4/IAN1 and GIMAP5/IAN5. Interacts with BCAP31. Interacts with IRF3; the interaction is inhibited by Sendai virus infection. Interacts with BECN1; thereby inhibiting autophagy in non-starvation conditions. Interacts with AMBRA1; thereby inhibiting autophagy. Phosphorylation/dephosphorylation on Ser-63 regulates anti-apoptotic activity. Growth factor-stimulated phosphorylation on Ser-63 by PKC is required for the anti-apoptosis activity and occurs during the G2/M phase of the cell cycle. In the absence of growth factors, BCL2 appears to be phosphorylated by other protein kinases such as ERKs and stress-activated kinases. Phosphorylated by MAPK8/JNK1 at Thr-62, Ser-63 and Ser-77, which stimulates starvation-induced autophagy. Dephosphorylated by protein phosphatase 2A (PP2A). Post-translationally, proteolytically cleaved by caspases during apoptosis. The cleaved protein, lacking the BH4 motif, has pro-apoptotic activity, causes the release of cytochrome c into the cytosol promoting further caspase activity. In terms of processing, monoubiquitinated by PRKN, leading to an increase in its stability. Ubiquitinated by SCF(FBXO10), leading to its degradation by the proteasome.

Its subcellular location is the mitochondrion outer membrane. The protein localises to the nucleus membrane. The protein resides in the endoplasmic reticulum membrane. It localises to the cytoplasm. Its function is as follows. Suppresses apoptosis in a variety of cell systems including factor-dependent lymphohematopoietic and neural cells. Regulates cell death by controlling the mitochondrial membrane permeability. Appears to function in a feedback loop system with caspases. Inhibits caspase activity either by preventing the release of cytochrome c from the mitochondria and/or by binding to the apoptosis-activating factor (APAF-1). Also acts as an inhibitor of autophagy: interacts with BECN1 and AMBRA1 during non-starvation conditions and inhibits their autophagy function. May attenuate inflammation by impairing NLRP1-inflammasome activation, hence CASP1 activation and IL1B release. This chain is Apoptosis regulator Bcl-2 (BCL2), found in Bos taurus (Bovine).